We begin with the raw amino-acid sequence, 294 residues long: Aspartate carbamoyltransferase catalytic subunit (294 aa).

Positions 49 and 50 each coordinate carbamoyl phosphate. K77 serves as a coordination point for L-aspartate. Residues R99, H127, and Q130 each coordinate carbamoyl phosphate. Residues R161 and R211 each coordinate L-aspartate. The carbamoyl phosphate site is built by G250 and P251.

The protein belongs to the aspartate/ornithine carbamoyltransferase superfamily. ATCase family. Heterododecamer (2C3:3R2) of six catalytic PyrB chains organized as two trimers (C3), and six regulatory PyrI chains organized as three dimers (R2).

The enzyme catalyses carbamoyl phosphate + L-aspartate = N-carbamoyl-L-aspartate + phosphate + H(+). It functions in the pathway pyrimidine metabolism; UMP biosynthesis via de novo pathway; (S)-dihydroorotate from bicarbonate: step 2/3. Functionally, catalyzes the condensation of carbamoyl phosphate and aspartate to form carbamoyl aspartate and inorganic phosphate, the committed step in the de novo pyrimidine nucleotide biosynthesis pathway. The polypeptide is Aspartate carbamoyltransferase catalytic subunit (Sulfurovum sp. (strain NBC37-1)).